Here is a 447-residue protein sequence, read N- to C-terminus: GTPase Der (447 aa).

2 EngA-type G domains span residues 3-167 (PVVA…HLED) and 180-353 (IKLA…KAAN). GTP-binding positions include 9–16 (GRPNVGKS), 56–60 (DTGGF), 119–122 (NKAE), 186–193 (GRPNVGKS), 233–237 (DTAGL), and 298–301 (NKWD). In terms of domain architecture, KH-like spans 354–438 (CKMSTPILTR…PMRIEFKSST (85 aa)).

The protein belongs to the TRAFAC class TrmE-Era-EngA-EngB-Septin-like GTPase superfamily. EngA (Der) GTPase family. In terms of assembly, associates with the 50S ribosomal subunit.

In terms of biological role, GTPase that plays an essential role in the late steps of ribosome biogenesis. The sequence is that of GTPase Der from Albidiferax ferrireducens (strain ATCC BAA-621 / DSM 15236 / T118) (Rhodoferax ferrireducens).